The following is a 507-amino-acid chain: MFFSNQYIKQRIQKGEELRELGRNPYDNQLMRTLTHAQFLQKFEALKSLESEEKRDESAKESIAGRIKFLRHMGKAAFAKIEDESGILQIYFSQNELGEDFKMLKKLAEVGDIVAVSGFPFVTKTGELSLHALEMKILTKAIVPLPEKYHGLVDVELRYRQRYLDLIMNPEVKETFKLRSQVVSSVRRFFEERGFLEVETPMMHPIPGGANAKPFITHHNALGVDRYLRIAPELYLKRLVVGGFEAVFEINRNFRNEGMDHSHNPEFTMIEFYWAYKTYHELMSLTEELFGYLFERLGLPKILPHGEEMIDFSLPFRRIPYKKALHEIGGVPLEVIEEKEKLRAYLIEKGVRLEGEMGIGKLQAEAFDAFVEEKLINPTFITEFPIEISPLARRSDENPQIADRFELFIGKKEISNGFSELNDPLDQLERFKAQVAAKNAGDEEAQHMDEDYVWALGHGLPPTAGEGIGIDRLVMLLTNNRSIKDVILFPALKVQKSDYTILKEEEA.

Mg(2+) is bound by residues glutamate 406 and glutamate 413.

This sequence belongs to the class-II aminoacyl-tRNA synthetase family. Homodimer. The cofactor is Mg(2+).

It localises to the cytoplasm. It catalyses the reaction tRNA(Lys) + L-lysine + ATP = L-lysyl-tRNA(Lys) + AMP + diphosphate. The chain is Lysine--tRNA ligase from Wolinella succinogenes (strain ATCC 29543 / DSM 1740 / CCUG 13145 / JCM 31913 / LMG 7466 / NCTC 11488 / FDC 602W) (Vibrio succinogenes).